Here is a 798-residue protein sequence, read N- to C-terminus: Acetamidase regulatory protein (798 aa).

The segment at residues 20-50 (CVHCHRRKVRCDARLVGLPCSNCRSAGKTDC) is a DNA-binding region (zn(2)-C6 fungal-type). Disordered regions lie at residues 68–96 (VPIR…PPNA), 115–172 (ANRV…ESRA), and 632–714 (LRTT…TLSA). Low complexity-rich tracts occupy residues 82–94 (KPIS…SEPP) and 133–147 (TRSN…QYQN). Residues 632 to 641 (LRTTTSDRPR) are compositionally biased toward basic and acidic residues. The segment covering 644 to 663 (SNLSNNSTNSPASQQKNTSG) has biased composition (polar residues). Over residues 678 to 687 (PSAPSIPPLQ) the composition is skewed to pro residues.

It localises to the nucleus. Positively regulates the expression of 5 genes involved in the catabolism of certain amides (amdS), omega amino acids (gatA and gabA), and lactams (lamA and lamB) in the presence of omega amino acid inducers. This is Acetamidase regulatory protein (amdR) from Emericella nidulans (strain FGSC A4 / ATCC 38163 / CBS 112.46 / NRRL 194 / M139) (Aspergillus nidulans).